Reading from the N-terminus, the 854-residue chain is Probable disease resistance protein At1g51480 (854 aa).

A coiled-coil region spans residues 25–62 (RNYIHKMEANLDDLHTTMEELKNGRDDLLRRVSIEEDK). Residues 138–441 (AHKIPVPKVE…CEGYINPNRY (304 aa)) form the NB-ARC domain. Position 180–187 (180–187 (GMGGVGKT)) interacts with ATP. LRR repeat units follow at residues 514–535 (IVRQ…SKCS), 536–557 (NLST…FFLF), 560–582 (KLVV…ISNL), 584–605 (SLQY…MKKL), 607–629 (KLIY…SATL), and 631–652 (NLQV…MEEL).

It belongs to the disease resistance NB-LRR family.

Functionally, probable disease resistance protein. This is Probable disease resistance protein At1g51480 from Arabidopsis thaliana (Mouse-ear cress).